Consider the following 156-residue polypeptide: Large ribosomal subunit protein uL22 (156 aa).

Belongs to the universal ribosomal protein uL22 family. As to quaternary structure, part of the 50S ribosomal subunit.

In terms of biological role, this protein binds specifically to 23S rRNA. It makes multiple contacts with different domains of the 23S rRNA in the assembled 50S subunit and ribosome. Its function is as follows. The globular domain of the protein is located near the polypeptide exit tunnel on the outside of the subunit, while an extended beta-hairpin is found that lines the wall of the exit tunnel in the center of the 70S ribosome. The sequence is that of Large ribosomal subunit protein uL22 from Halobacterium salinarum (strain ATCC 700922 / JCM 11081 / NRC-1) (Halobacterium halobium).